The chain runs to 364 residues: Uroporphyrinogen decarboxylase (364 aa).

Residues 28-32 (RQAGR), Asp78, Tyr160, Thr215, and His333 contribute to the substrate site.

It belongs to the uroporphyrinogen decarboxylase family. In terms of assembly, homodimer.

It is found in the cytoplasm. It catalyses the reaction uroporphyrinogen III + 4 H(+) = coproporphyrinogen III + 4 CO2. It functions in the pathway porphyrin-containing compound metabolism; protoporphyrin-IX biosynthesis; coproporphyrinogen-III from 5-aminolevulinate: step 4/4. Catalyzes the decarboxylation of four acetate groups of uroporphyrinogen-III to yield coproporphyrinogen-III. This Burkholderia mallei (strain NCTC 10247) protein is Uroporphyrinogen decarboxylase.